The sequence spans 1234 residues: Complement factor H (1234 aa).

The first 18 residues, 1-18 (MRLSARIIWLILWTVCAA), serve as a signal peptide directing secretion. 20 Sushi domains span residues 19-82 (EDCK…ICRK), 83-143 (KPCG…LCEV), 144-207 (VKCL…RCVE), 208-264 (ILCT…FCEE), 265-322 (KRCS…RCTL), 324-386 (PCEF…VPCV), 387-444 (RKCV…KCIR), 446-507 (KTCS…SCIK), 508-566 (SCDM…SCYE), 567-624 (RECS…TCKG), 627-685 (ASCA…VCIE), 688-745 (RTCG…KCVA), 750-804 (EKCR…NCTS), 806-863 (TSCP…RCIE), 865-933 (IPCS…RCVG), 934-991 (LPCG…KCIK), 992-1050 (TDCD…VCKD), 1051-1109 (NSCV…KCRD), 1112-1170 (GKCG…TCLH), and 1171-1234 (ACVI…PTCV). 40 disulfides stabilise this stretch: Cys21-Cys66, Cys52-Cys80, Cys85-Cys129, Cys114-Cys141, Cys146-Cys192, Cys178-Cys205, Cys210-Cys251, Cys237-Cys262, Cys267-Cys309, Cys294-Cys320, Cys325-Cys374, Cys357-Cys385, Cys389-Cys431, Cys416-Cys442, Cys448-Cys494, Cys477-Cys505, Cys509-Cys553, Cys536-Cys564, Cys569-Cys610, Cys597-Cys622, Cys629-Cys672, Cys658-Cys683, Cys690-Cys732, Cys718-Cys743, Cys752-Cys791, Cys780-Cys802, Cys808-Cys850, Cys836-Cys861, Cys867-Cys920, Cys906-Cys931, Cys936-Cys978, Cys964-Cys989, Cys994-Cys1037, Cys1023-Cys1048, Cys1053-Cys1096, Cys1082-Cys1107, Cys1114-Cys1157, Cys1143-Cys1168, Cys1172-Cys1223, and Cys1206-Cys1233. Residues Asn676, Asn721, Asn773, and Asn801 are each glycosylated (N-linked (GlcNAc...) asparagine). Residues 872-896 (TIEHGSINLPRSSEERRDSIESSSH) form a disordered region. Residues 883–896 (SSEERRDSIESSSH) show a composition bias toward basic and acidic residues. Asn1030 and Asn1061 each carry an N-linked (GlcNAc...) asparagine glycan. At Ser1198 the chain carries Phosphoserine. Residue Asn1225 is glycosylated (N-linked (GlcNAc...) asparagine).

Homodimer. Also forms homooligomers. Interacts with complement protein C3b; this interaction inhibits complement activation. Interacts with complement protein C3d. Interacts with CR3/ITGAM; this interaction mediates adhesion of neutrophils to pathogens leading to pathogen clearance. Sulfated on tyrosine residues. CFH is one of the most abundant complement components in blood where the liver is the major source of CFH protein in vivo. in addition, CFH is secreted by additional cell types including monocytes, fibroblasts, or endothelial cells.

The protein localises to the secreted. Glycoprotein that plays an essential role in maintaining a well-balanced immune response by modulating complement activation. Acts as a soluble inhibitor of complement, where its binding to self markers such as glycan structures prevents complement activation and amplification on cell surfaces. Accelerates the decay of the complement alternative pathway (AP) C3 convertase C3bBb, thus preventing local formation of more C3b, the central player of the complement amplification loop. As a cofactor of the serine protease factor I, CFH also regulates proteolytic degradation of already-deposited C3b. In addition, mediates several cellular responses through interaction with specific receptors. For example, interacts with CR3/ITGAM receptor and thereby mediates the adhesion of human neutrophils to different pathogens. In turn, these pathogens are phagocytosed and destroyed. This Mus musculus (Mouse) protein is Complement factor H (Cfh).